Reading from the N-terminus, the 315-residue chain is Shiga toxin subunit A (315 aa).

Residues 1–22 (MKIIIFRVLTFFFVIFSVNVVA) form the signal peptide. The A1 stretch occupies residues 23-273 (KEFTLDFSTA…CHHHASRVAR (251 aa)). Residue Glu189 is part of the active site. A disulfide bridge connects residues Cys264 and Cys283. The tract at residues 274 to 315 (MASDEFPSMCPADGRVRGITHNKILWDSSTLGAILMRRTISS) is A2.

It belongs to the ribosome-inactivating protein family. As to quaternary structure, shiga toxin contains a single subunit A and five copies of subunit B.

The catalysed reaction is Endohydrolysis of the N-glycosidic bond at one specific adenosine on the 28S rRNA.. The A subunit is responsible for inhibiting protein synthesis through the catalytic inactivation of 60S ribosomal subunits. After endocytosis, the A subunit is cleaved by furin in two fragments, A1 and A2: A1 is the catalytically active fragment, and A2 is essential for holotoxin assembly with the B subunits. The chain is Shiga toxin subunit A (stxA) from Shigella sonnei (Shigella sonnei bacteriophage 7888).